The primary structure comprises 158 residues: MESIYDFVVQKNNGESYKLEQYKGDVMLIVNTASECGFTPQFEGLQKLYDEYKDQRFIILGFPCNQFGGQEPGSGEEAAQNCKINYGVTFPIHEKVDVKGDNQHPLFHFLTNAAKGMINEKIKWNFTKFLIDREGNVIKRFSPQKKPEQIKTEIEKLL.

C36 is a catalytic residue.

The protein belongs to the glutathione peroxidase family.

In Staphylococcus epidermidis (strain ATCC 12228 / FDA PCI 1200), this protein is Glutathione peroxidase homolog BsaA (bsaA).